The sequence spans 345 residues: tRNA N6-adenosine threonylcarbamoyltransferase (345 aa).

Residues histidine 111 and histidine 115 each coordinate Fe cation. Substrate-binding positions include 134-138 (LVSGG), aspartate 167, glycine 180, aspartate 184, and asparagine 278. Aspartate 306 is a binding site for Fe cation.

Belongs to the KAE1 / TsaD family. The cofactor is Fe(2+).

Its subcellular location is the cytoplasm. It catalyses the reaction L-threonylcarbamoyladenylate + adenosine(37) in tRNA = N(6)-L-threonylcarbamoyladenosine(37) in tRNA + AMP + H(+). Required for the formation of a threonylcarbamoyl group on adenosine at position 37 (t(6)A37) in tRNAs that read codons beginning with adenine. Is involved in the transfer of the threonylcarbamoyl moiety of threonylcarbamoyl-AMP (TC-AMP) to the N6 group of A37, together with TsaE and TsaB. TsaD likely plays a direct catalytic role in this reaction. In Cyanothece sp. (strain PCC 7425 / ATCC 29141), this protein is tRNA N6-adenosine threonylcarbamoyltransferase.